The sequence spans 632 residues: Chaperone protein HtpG (632 aa).

Residues 1-339 (MTQQTMSFQA…SSDLPLNVSR (339 aa)) are a; substrate-binding. A b region spans residues 340–559 (EILQESRDVK…DNDMSGYLQR (220 aa)). The segment at 560 to 632 (MLKAAGQSAP…TNALLLSRAA (73 aa)) is c.

It belongs to the heat shock protein 90 family. In terms of assembly, homodimer.

It localises to the cytoplasm. Molecular chaperone. Has ATPase activity. The protein is Chaperone protein HtpG of Burkholderia pseudomallei (strain 1106a).